Reading from the N-terminus, the 103-residue chain is Flagellar hook-basal body complex protein FliE (103 aa).

The protein belongs to the FliE family.

The protein localises to the bacterial flagellum basal body. The protein is Flagellar hook-basal body complex protein FliE of Yersinia pestis.